The primary structure comprises 543 residues: Formin-binding protein 1-like (543 aa).

The region spanning 1–263 (MSWGTELWDQ…AAKSVDERRD (263 aa)) is the F-BAR domain. Coiled coils occupy residues 66–258 (FTSC…AKSV) and 334–426 (LEDF…QRSE). An REM-1 domain is found at 339–416 (HLPPEQRRKR…IHKNEGWLSE (78 aa)). Positions 424-467 (RSERRHSAEANHLVAQGRESPEGSYTEDANQEGRVQPQHHAHPE) are disordered. The 62-residue stretch at 479–540 (PAIGHCKSLY…PTSYIEITLE (62 aa)) folds into the SH3 domain.

This sequence belongs to the FNBP1 family. As to quaternary structure, homodimerizes, the dimers can polymerize end-to-end to form filamentous structures. Interacts with GTP-bound cdc42 and wasl/n-wasp.

It localises to the cytoplasm. The protein localises to the cytoskeleton. Its subcellular location is the cell cortex. The protein resides in the cytoplasmic vesicle. It is found in the cell membrane. In terms of biological role, required to coordinate membrane tubulation with reorganization of the actin cytoskeleton during endocytosis. Essential for autophagy of intracellular bacterial pathogens. Promotes cdc42-induced actin polymerization by activating the wasl-waspip complex, the predominant form of wasl/n-wasp in cells. This chain is Formin-binding protein 1-like (fnbp1l), found in Xenopus laevis (African clawed frog).